A 296-amino-acid polypeptide reads, in one-letter code: Morphine 6-dehydrogenase (296 aa).

13–22 contacts NADP(+); it reads GVKMPALGLG. The active-site Proton donor is Tyr52. Substrate is bound at residue His110.

The protein belongs to the aldo/keto reductase family. In terms of assembly, monomer.

The catalysed reaction is morphine + NAD(+) = morphinone + NADH + H(+). The enzyme catalyses morphine + NADP(+) = morphinone + NADPH + H(+). The protein operates within alkaloid degradation; codeine degradation. It participates in alkaloid degradation; morphine degradation. In terms of biological role, oxidizes only the C-6 hydroxy group of morphine and codeine. In Pseudomonas putida (Arthrobacter siderocapsulatus), this protein is Morphine 6-dehydrogenase (morA).